Here is a 212-residue protein sequence, read N- to C-terminus: MNSVSTSAFGPVAFSLGLLLVLPAAFPAPVLPGEDSKDVAAPHSQPLTSSERIDKHIRYILDGISALRKETCNRSNMCESSKEALAENNLNLPKMAEKDGCFQSGFNEDTCLVKIITGLLEFEVYLEYLQNRFESSEEQARAVQMSTKALIQFLQKKAKNLDAITTPEPTTNASLLTKLQAQNQWLQDMTTHLILRSFKEFLQSSLRALRQM.

The first 27 residues, 1 to 27 (MNSVSTSAFGPVAFSLGLLLVLPAAFP), serve as a signal peptide directing secretion. Residues cysteine 72 and cysteine 78 are joined by a disulfide bond. A glycan (N-linked (GlcNAc...) asparagine) is linked at asparagine 73. Residue serine 81 is modified to Phosphoserine. The cysteines at positions 101 and 111 are disulfide-linked. A glycan (N-linked (GlcNAc...) asparagine) is linked at asparagine 172.

It belongs to the IL-6 superfamily. As to quaternary structure, component of a hexamer of two molecules each of IL6, IL6R and IL6ST; first binds to IL6R to associate with the signaling subunit IL6ST. Interacts with IL6R (via the N-terminal ectodomain); this interaction may be affected by IL6R-binding with SORL1, hence decreasing IL6 cis signaling. Interacts with SORL1 (via the N-terminal ectodomain); this interaction leads to IL6 internalization and lysosomal degradation. May form a trimeric complex with the soluble SORL1 ectodomain and soluble IL6R receptor; this interaction might stabilize circulating IL6, hence promoting IL6 trans signaling.

Its subcellular location is the secreted. In terms of biological role, cytokine with a wide variety of biological functions in immunity, tissue regeneration, and metabolism. Binds to IL6R, then the complex associates to the signaling subunit IL6ST/gp130 to trigger the intracellular IL6-signaling pathway. The interaction with the membrane-bound IL6R and IL6ST stimulates 'classic signaling', whereas the binding of IL6 and soluble IL6R to IL6ST stimulates 'trans-signaling'. Alternatively, 'cluster signaling' occurs when membrane-bound IL6:IL6R complexes on transmitter cells activate IL6ST receptors on neighboring receiver cells. Functionally, IL6 is a potent inducer of the acute phase response. Rapid production of IL6 contributes to host defense during infection and tissue injury, but excessive IL6 synthesis is involved in disease pathology. In the innate immune response, is synthesized by myeloid cells, such as macrophages and dendritic cells, upon recognition of pathogens through toll-like receptors (TLRs) at the site of infection or tissue injury. In the adaptive immune response, is required for the differentiation of B cells into immunoglobulin-secreting cells. Plays a major role in the differentiation of CD4(+) T cell subsets. Essential factor for the development of T follicular helper (Tfh) cells that are required for the induction of germinal-center formation. Required to drive naive CD4(+) T cells to the Th17 lineage. Also required for proliferation of myeloma cells and the survival of plasmablast cells. Its function is as follows. Acts as an essential factor in bone homeostasis and on vessels directly or indirectly by induction of VEGF, resulting in increased angiogenesis activity and vascular permeability. Induces, through 'trans-signaling' and synergistically with IL1B and TNF, the production of VEGF. Involved in metabolic controls, is discharged into the bloodstream after muscle contraction increasing lipolysis and improving insulin resistance. 'Trans-signaling' in central nervous system also regulates energy and glucose homeostasis. Mediates, through GLP-1, crosstalk between insulin-sensitive tissues, intestinal L cells and pancreatic islets to adapt to changes in insulin demand. Also acts as a myokine. Plays a protective role during liver injury, being required for maintenance of tissue regeneration. Also has a pivotal role in iron metabolism by regulating HAMP/hepcidin expression upon inflammation or bacterial infection. Through activation of IL6ST-YAP-NOTCH pathway, induces inflammation-induced epithelial regeneration. This chain is Interleukin-6 (IL6), found in Macaca thibetana (Pere David's macaque).